The sequence spans 432 residues: 3-phosphoshikimate 1-carboxyvinyltransferase (432 aa).

3-phosphoshikimate contacts are provided by K23, S24, and R28. Residue K23 participates in phosphoenolpyruvate binding. Phosphoenolpyruvate is bound by residues G95 and R123. Residues S167, Q169, D317, and K344 each contribute to the 3-phosphoshikimate site. Phosphoenolpyruvate is bound at residue Q169. Residue D317 is the Proton acceptor of the active site. R348 and R390 together coordinate phosphoenolpyruvate.

Belongs to the EPSP synthase family. In terms of assembly, monomer.

The protein localises to the cytoplasm. It catalyses the reaction 3-phosphoshikimate + phosphoenolpyruvate = 5-O-(1-carboxyvinyl)-3-phosphoshikimate + phosphate. It functions in the pathway metabolic intermediate biosynthesis; chorismate biosynthesis; chorismate from D-erythrose 4-phosphate and phosphoenolpyruvate: step 6/7. In terms of biological role, catalyzes the transfer of the enolpyruvyl moiety of phosphoenolpyruvate (PEP) to the 5-hydroxyl of shikimate-3-phosphate (S3P) to produce enolpyruvyl shikimate-3-phosphate and inorganic phosphate. The chain is 3-phosphoshikimate 1-carboxyvinyltransferase from Staphylococcus aureus (strain Newman).